The primary structure comprises 164 residues: Peptidyl-prolyl cis-trans isomerase B (164 aa).

A PPIase cyclophilin-type domain is found at 1 to 162 (MVTFHTNHGD…EDVIIESVTV (162 aa)).

It belongs to the cyclophilin-type PPIase family.

Its subcellular location is the cytoplasm. It carries out the reaction [protein]-peptidylproline (omega=180) = [protein]-peptidylproline (omega=0). With respect to regulation, inhibition by cyclosporin A with a Ki of 25 to 50 mu-mol, a concentration 1000-fold higher than that required for eukaryotic PPIases. Its function is as follows. PPIases accelerate the folding of proteins. It catalyzes the cis-trans isomerization of proline imidic peptide bonds in oligopeptides. The sequence is that of Peptidyl-prolyl cis-trans isomerase B (ppiB) from Escherichia coli (strain K12).